A 436-amino-acid chain; its full sequence is Mannitol-binding protein (436 aa).

Positions 1–22 are cleaved as a signal peptide; the sequence is MNDSIKACLAAACLALPLLAQG.

The protein belongs to the bacterial solute-binding protein 1 family.

It localises to the periplasm. Functionally, binds mannitol with high affinity. This chain is Mannitol-binding protein, found in Pseudomonas aeruginosa (strain ATCC 15692 / DSM 22644 / CIP 104116 / JCM 14847 / LMG 12228 / 1C / PRS 101 / PAO1).